Consider the following 132-residue polypeptide: MRSLVVCLLLAACALECTARLQNVTVKGVAVCNKKRLANVEVQLYEKDTLDPDDLLDTKKTDAEGEFSVYGEEDETHAIAPYLLITHSCNPSKPNCVRIGRYLVPEDKIGGTYDMTYVTLDIKVHGEKEKCQ.

The first 19 residues, 1–19 (MRSLVVCLLLAACALECTA), serve as a signal peptide directing secretion. Residue Asn23 is glycosylated (N-linked (GlcNAc...) asparagine).

This sequence belongs to the nematode transthyretin-like family.

The protein localises to the secreted. This is Transthyretin-like protein 16 (ttr-16) from Caenorhabditis elegans.